The sequence spans 245 residues: Eukaryotic translation initiation factor 3 subunit K (245 aa).

Residues 46–227 (YDCYANLALL…EAKGTVVREN (182 aa)) form the PCI domain.

Belongs to the eIF-3 subunit K family. Component of the eukaryotic translation initiation factor 3 (eIF-3) complex.

The protein localises to the cytoplasm. Its function is as follows. Component of the eukaryotic translation initiation factor 3 (eIF-3) complex, which is involved in protein synthesis of a specialized repertoire of mRNAs and, together with other initiation factors, stimulates binding of mRNA and methionyl-tRNAi to the 40S ribosome. The eIF-3 complex specifically targets and initiates translation of a subset of mRNAs involved in cell proliferation. The polypeptide is Eukaryotic translation initiation factor 3 subunit K (Phaeosphaeria nodorum (strain SN15 / ATCC MYA-4574 / FGSC 10173) (Glume blotch fungus)).